Consider the following 146-residue polypeptide: Hemoglobin subunit beta (146 aa).

Val1 bears the N-acetylvaline mark. The Globin domain occupies His2–His146. Thr12 carries the phosphothreonine modification. An N6-acetyllysine modification is found at Lys59. His63 provides a ligand contact to heme b. An N6-acetyllysine modification is found at Lys82. His92 is a binding site for heme b. Cys93 bears the S-nitrosocysteine mark. The residue at position 144 (Lys144) is an N6-acetyllysine.

Belongs to the globin family. In terms of assembly, heterotetramer of two alpha chains and two beta chains. In terms of tissue distribution, red blood cells.

Involved in oxygen transport from the lung to the various peripheral tissues. The polypeptide is Hemoglobin subunit beta (HBB) (Potorous tridactylus (Potoroo)).